The chain runs to 159 residues: Cyclic pyranopterin monophosphate synthase (159 aa).

Residues 76-78 (LCH) and 114-115 (ME) contribute to the substrate site. The active site involves Asp-129.

Belongs to the MoaC family. In terms of assembly, homohexamer; trimer of dimers.

It carries out the reaction (8S)-3',8-cyclo-7,8-dihydroguanosine 5'-triphosphate = cyclic pyranopterin phosphate + diphosphate. Its pathway is cofactor biosynthesis; molybdopterin biosynthesis. Its function is as follows. Catalyzes the conversion of (8S)-3',8-cyclo-7,8-dihydroguanosine 5'-triphosphate to cyclic pyranopterin monophosphate (cPMP). This Clostridium botulinum (strain Alaska E43 / Type E3) protein is Cyclic pyranopterin monophosphate synthase.